Reading from the N-terminus, the 307-residue chain is Beta-lactamase (307 aa).

Positions 1-34 form a signal peptide, tat-type signal; it reads MRNRGFGRRELLVAMAMLVSVTGCARHASGARPA. The Acyl-ester intermediate role is filled by Ser84. Ser142 contributes to the substrate binding site. The Proton acceptor role is filled by Glu182. Substrate is bound at residue 251 to 253; that stretch reads TGT.

The protein belongs to the class-A beta-lactamase family. As to quaternary structure, monomer. Exported by the Tat system. The position of the signal peptide cleavage has not been experimentally proven.

The protein localises to the periplasm. Its subcellular location is the secreted. It catalyses the reaction a beta-lactam + H2O = a substituted beta-amino acid. Its activity is regulated as follows. Is inhibited by clavulanate. Its function is as follows. Extended spectrum beta-lactamase (ESBL) that inactivates beta-lactam antibiotics by hydrolyzing the amide group of the beta-lactam ring. Displays high levels of penicillinase and cephalosporinase activity as well as measurable activity with carbapenems, including imipenem and meropenem. Plays a primary role in the intrinsic resistance of mycobacteria to beta-lactam antibiotics. This is Beta-lactamase (blaC) from Mycobacterium bovis (strain ATCC BAA-935 / AF2122/97).